A 460-amino-acid chain; its full sequence is V-type ATP synthase beta chain (460 aa).

Belongs to the ATPase alpha/beta chains family.

Produces ATP from ADP in the presence of a proton gradient across the membrane. The V-type beta chain is a regulatory subunit. The sequence is that of V-type ATP synthase beta chain from Thermotoga neapolitana (strain ATCC 49049 / DSM 4359 / NBRC 107923 / NS-E).